Consider the following 474-residue polypeptide: tRNA-2-methylthio-N(6)-dimethylallyladenosine synthase (474 aa).

One can recognise an MTTase N-terminal domain in the interval 3–120 (KKLHIKTWGC…LPEMIDQVQR (118 aa)). Positions 12, 49, 83, 157, 161, and 164 each coordinate [4Fe-4S] cluster. One can recognise a Radical SAM core domain in the interval 143–375 (RADGPTAFVS…QDRITQQAMR (233 aa)). One can recognise a TRAM domain in the interval 378–441 (RQMLGTVQRI…TNSLRGIFIR (64 aa)).

This sequence belongs to the methylthiotransferase family. MiaB subfamily. In terms of assembly, monomer. [4Fe-4S] cluster is required as a cofactor.

The protein resides in the cytoplasm. The enzyme catalyses N(6)-dimethylallyladenosine(37) in tRNA + (sulfur carrier)-SH + AH2 + 2 S-adenosyl-L-methionine = 2-methylsulfanyl-N(6)-dimethylallyladenosine(37) in tRNA + (sulfur carrier)-H + 5'-deoxyadenosine + L-methionine + A + S-adenosyl-L-homocysteine + 2 H(+). Functionally, catalyzes the methylthiolation of N6-(dimethylallyl)adenosine (i(6)A), leading to the formation of 2-methylthio-N6-(dimethylallyl)adenosine (ms(2)i(6)A) at position 37 in tRNAs that read codons beginning with uridine. In Shewanella denitrificans (strain OS217 / ATCC BAA-1090 / DSM 15013), this protein is tRNA-2-methylthio-N(6)-dimethylallyladenosine synthase.